Reading from the N-terminus, the 450-residue chain is Putative serine/threonine-protein kinase R517/R518 (450 aa).

The region spanning 9–290 (KMTDTVLGKG…WSELFHHYWF (282 aa)) is the Protein kinase domain. ATP contacts are provided by residues 15-23 (LGKGGFSEV) and lysine 38. The active-site Proton acceptor is the aspartate 140.

The protein belongs to the protein kinase superfamily. Ser/Thr protein kinase family.

The catalysed reaction is L-seryl-[protein] + ATP = O-phospho-L-seryl-[protein] + ADP + H(+). It catalyses the reaction L-threonyl-[protein] + ATP = O-phospho-L-threonyl-[protein] + ADP + H(+). The protein is Putative serine/threonine-protein kinase R517/R518 of Acanthamoeba polyphaga mimivirus (APMV).